The following is a 365-amino-acid chain: Cobalt-precorrin-5B C(1)-methyltransferase (365 aa).

This sequence belongs to the CbiD family.

The catalysed reaction is Co-precorrin-5B + S-adenosyl-L-methionine = Co-precorrin-6A + S-adenosyl-L-homocysteine. Its pathway is cofactor biosynthesis; adenosylcobalamin biosynthesis; cob(II)yrinate a,c-diamide from sirohydrochlorin (anaerobic route): step 6/10. Its function is as follows. Catalyzes the methylation of C-1 in cobalt-precorrin-5B to form cobalt-precorrin-6A. The sequence is that of Cobalt-precorrin-5B C(1)-methyltransferase from Pseudomonas fluorescens (strain ATCC BAA-477 / NRRL B-23932 / Pf-5).